A 300-amino-acid chain; its full sequence is GTPase Era (300 aa).

In terms of domain architecture, Era-type G spans 7–175; that stretch reads KSGFAVMAGL…KTAVAETLPF (169 aa). The tract at residues 15 to 22 is G1; it reads GLPNAGKS. 15-22 serves as a coordination point for GTP; sequence GLPNAGKS. The G2 stretch occupies residues 41 to 45; sequence QMTRQ. A G3 region spans residues 62–65; the sequence is DTPG. Residues 62–66 and 124–127 contribute to the GTP site; these read DTPGF and NKAD. The tract at residues 124 to 127 is G4; it reads NKAD. The segment at 154–156 is G5; it reads ISA. Residues 198-283 enclose the KH type-2 domain; that stretch reads IREQIFNLYE…RLELEVSVEP (86 aa).

Belongs to the TRAFAC class TrmE-Era-EngA-EngB-Septin-like GTPase superfamily. Era GTPase family. In terms of assembly, monomer.

The protein localises to the cytoplasm. The protein resides in the cell inner membrane. An essential GTPase that binds both GDP and GTP, with rapid nucleotide exchange. Plays a role in 16S rRNA processing and 30S ribosomal subunit biogenesis and possibly also in cell cycle regulation and energy metabolism. The polypeptide is GTPase Era (Elusimicrobium minutum (strain Pei191)).